We begin with the raw amino-acid sequence, 372 residues long: tRNA N6-adenosine threonylcarbamoyltransferase (372 aa).

A divalent metal cation is bound by residues His-133, His-137, and Tyr-154. Substrate-binding positions include 154-158 (YVSGG), Asp-186, Gly-201, Glu-205, and Asn-301. Asp-330 provides a ligand contact to a divalent metal cation.

The protein belongs to the KAE1 / TsaD family. In terms of assembly, component of the EKC/KEOPS complex composed of at least BUD32, CGI121, GON7, KAE1 and PCC1; the whole complex dimerizes. Requires a divalent metal cation as cofactor.

It is found in the cytoplasm. The protein localises to the nucleus. The enzyme catalyses L-threonylcarbamoyladenylate + adenosine(37) in tRNA = N(6)-L-threonylcarbamoyladenosine(37) in tRNA + AMP + H(+). Functionally, component of the EKC/KEOPS complex that is required for the formation of a threonylcarbamoyl group on adenosine at position 37 (t(6)A37) in tRNAs that read codons beginning with adenine. The complex is probably involved in the transfer of the threonylcarbamoyl moiety of threonylcarbamoyl-AMP (TC-AMP) to the N6 group of A37. KAE1 likely plays a direct catalytic role in this reaction, but requires other protein(s) of the complex to fulfill this activity. The EKC/KEOPS complex also promotes both telomere uncapping and telomere elongation. The complex is required for efficient recruitment of transcriptional coactivators. The protein is tRNA N6-adenosine threonylcarbamoyltransferase of Candida albicans (strain SC5314 / ATCC MYA-2876) (Yeast).